Here is a 437-residue protein sequence, read N- to C-terminus: Histidine--tRNA ligase (437 aa).

Belongs to the class-II aminoacyl-tRNA synthetase family. Homodimer.

The protein localises to the cytoplasm. The catalysed reaction is tRNA(His) + L-histidine + ATP = L-histidyl-tRNA(His) + AMP + diphosphate + H(+). This is Histidine--tRNA ligase from Leptospira biflexa serovar Patoc (strain Patoc 1 / Ames).